We begin with the raw amino-acid sequence, 417 residues long: Serine--tRNA ligase (417 aa).

L-serine is bound at residue 226-228 (TSE). ATP contacts are provided by residues 257–259 (RRE) and valine 273. L-serine is bound at residue glutamate 280. Residue 344–347 (EVTS) coordinates ATP. Threonine 379 provides a ligand contact to L-serine.

Belongs to the class-II aminoacyl-tRNA synthetase family. Type-1 seryl-tRNA synthetase subfamily. In terms of assembly, homodimer. The tRNA molecule binds across the dimer.

The protein localises to the cytoplasm. It catalyses the reaction tRNA(Ser) + L-serine + ATP = L-seryl-tRNA(Ser) + AMP + diphosphate + H(+). The catalysed reaction is tRNA(Sec) + L-serine + ATP = L-seryl-tRNA(Sec) + AMP + diphosphate + H(+). Its pathway is aminoacyl-tRNA biosynthesis; selenocysteinyl-tRNA(Sec) biosynthesis; L-seryl-tRNA(Sec) from L-serine and tRNA(Sec): step 1/1. In terms of biological role, catalyzes the attachment of serine to tRNA(Ser). Is also able to aminoacylate tRNA(Sec) with serine, to form the misacylated tRNA L-seryl-tRNA(Sec), which will be further converted into selenocysteinyl-tRNA(Sec). The sequence is that of Serine--tRNA ligase from Tropheryma whipplei (strain Twist) (Whipple's bacillus).